A 941-amino-acid polypeptide reads, in one-letter code: RNA-binding protein 4F (941 aa).

The span at Met-1 to Lys-13 shows a compositional bias: basic and acidic residues. A disordered region spans residues Met-1–Gln-149. Positions Glu-14–Asp-32 are enriched in acidic residues. Polar residues predominate over residues Gly-42–Pro-52. At Ser-43 the chain carries Phosphoserine. Over residues Glu-55 to Gln-65 the composition is skewed to basic and acidic residues. Positions Ser-87–Glu-98 are enriched in acidic residues. Residues Asp-111 to Ser-134 are compositionally biased toward low complexity. The residue at position 153 (Ser-153) is a Phosphoserine. The tract at residues Arg-629–Ser-713 is disordered. The segment covering Glu-671–Gln-680 has biased composition (low complexity). Ser-713 bears the Phosphoserine mark. The residue at position 717 (Tyr-717) is a Phosphotyrosine. At Ser-718 the chain carries Phosphoserine. Positions Asn-724–Pro-801 constitute an RRM domain. Composition is skewed to basic and acidic residues over residues Glu-862–Asp-902, Gln-913–Glu-922, and Ser-930–Asp-941. The interval Glu-862–Asp-941 is disordered.

It is found in the cytoplasm. May be involved in gene regulation during development. Binds RNA. The chain is RNA-binding protein 4F from Drosophila melanogaster (Fruit fly).